Here is an 89-residue protein sequence, read N- to C-terminus: Small ribosomal subunit protein uS15 (89 aa).

The protein belongs to the universal ribosomal protein uS15 family. Part of the 30S ribosomal subunit. Forms a bridge to the 50S subunit in the 70S ribosome, contacting the 23S rRNA.

Its function is as follows. One of the primary rRNA binding proteins, it binds directly to 16S rRNA where it helps nucleate assembly of the platform of the 30S subunit by binding and bridging several RNA helices of the 16S rRNA. Forms an intersubunit bridge (bridge B4) with the 23S rRNA of the 50S subunit in the ribosome. This is Small ribosomal subunit protein uS15 from Coxiella burnetii (strain CbuK_Q154) (Coxiella burnetii (strain Q154)).